Here is a 202-residue protein sequence, read N- to C-terminus: uncharacterized protein (202 aa).

This is an uncharacterized protein from Treponema pallidum (strain Nichols).